Consider the following 671-residue polypeptide: UvrABC system protein B (671 aa).

A Helicase ATP-binding domain is found at 25-178 (EGIKKGYKHQ…DAMLKKLVEI (154 aa)). 38-45 (GVTGSGKT) lines the ATP pocket. Residues 91-114 (YYDYYQPEAYIPETDTYIEKDALI) carry the Beta-hairpin motif. Residues 435-601 (QVEDLLEEIH…TVKSKIKDIL (167 aa)) form the Helicase C-terminal domain. A UVR domain is found at 626–661 (EETIKKLEQEMKHAAENLEFEKAAEIRDKIFKIKEK).

It belongs to the UvrB family. As to quaternary structure, forms a heterotetramer with UvrA during the search for lesions. Interacts with UvrC in an incision complex.

It localises to the cytoplasm. Functionally, the UvrABC repair system catalyzes the recognition and processing of DNA lesions. A damage recognition complex composed of 2 UvrA and 2 UvrB subunits scans DNA for abnormalities. Upon binding of the UvrA(2)B(2) complex to a putative damaged site, the DNA wraps around one UvrB monomer. DNA wrap is dependent on ATP binding by UvrB and probably causes local melting of the DNA helix, facilitating insertion of UvrB beta-hairpin between the DNA strands. Then UvrB probes one DNA strand for the presence of a lesion. If a lesion is found the UvrA subunits dissociate and the UvrB-DNA preincision complex is formed. This complex is subsequently bound by UvrC and the second UvrB is released. If no lesion is found, the DNA wraps around the other UvrB subunit that will check the other stand for damage. The protein is UvrABC system protein B of Thermodesulfovibrio yellowstonii (strain ATCC 51303 / DSM 11347 / YP87).